Consider the following 397-residue polypeptide: Nuclear egress protein 2 (397 aa).

The Perinuclear space segment spans residues 1–358 (MEMNKVLHQD…GPSRPQSGPW (358 aa)). 2 disordered regions span residues 205-245 (RTAG…PPPP) and 291-332 (AAAG…PSLE). S216 carries the post-translational modification Phosphoserine. 2 stretches are compositionally biased toward low complexity: residues 224-239 (PSCS…AAAG) and 291-301 (AAAGQDVGGSA). Residues 310-322 (SRRRGVSTHHRHP) are compositionally biased toward basic residues. Residues 359-381 (LPARFATLGPLVLALLLVLALLW) traverse the membrane as a helical segment. At 382–397 (RGHGQSSSPTRSAHRD) the chain is on the nuclear side.

The protein belongs to the herpesviridae NEC2 protein family. Forms a heterohexameric complex with NEC1. Interacts with host UBA7 and RNF170; this interaction promotes UBA7 proteasomal degradation. In terms of processing, phosphorylated. Phosphorylation by viral kinase UL97 at Ser-216 plays an important role for correct viral nuclear egress complex (NEC) localization.

It is found in the host nucleus inner membrane. Its function is as follows. Plays an essential role in virion nuclear egress, the first step of virion release from infected cell. Within the host nucleus, NEC1 interacts with the newly formed capsid through the vertexes and directs it to the inner nuclear membrane by associating with NEC2. Induces the budding of the capsid at the inner nuclear membrane as well as its envelopment into the perinuclear space. There, the NEC1/NEC2 complex promotes the fusion of the enveloped capsid with the outer nuclear membrane and the subsequent release of the viral capsid into the cytoplasm where it will reach the secondary budding sites in the host Golgi or trans-Golgi network. Inhibits host ISGylation and subsequent innate antiviral response by targeting host UBA7 for proteasomal degradation. The chain is Nuclear egress protein 2 from Human cytomegalovirus (strain AD169) (HHV-5).